The sequence spans 106 residues: UPF0145 protein CTC_01500 (106 aa).

The protein belongs to the UPF0145 family.

This Clostridium tetani (strain Massachusetts / E88) protein is UPF0145 protein CTC_01500.